Here is a 482-residue protein sequence, read N- to C-terminus: Dual specificity protein phosphatase 10 (482 aa).

The 118-residue stretch at 168-285 (PSQGPVIIDC…FKQNHENLCD (118 aa)) folds into the Rhodanese domain. The interval 199-215 (KISRRRLQQGKITVLDL) is interaction with MAP kinases. Positions 321–464 (ELTPILPFLF…LLEFEEDLNN (144 aa)) constitute a Tyrosine-protein phosphatase domain. The active-site Phosphocysteine intermediate is the cysteine 408.

The protein belongs to the protein-tyrosine phosphatase family. Non-receptor class dual specificity subfamily. As to quaternary structure, monomer. Interacts with MAPK14. As to expression, expressed in keratinocytes (at protein level). Detected in brain.

Its subcellular location is the cytoplasm. The protein resides in the nucleus. It carries out the reaction O-phospho-L-tyrosyl-[protein] + H2O = L-tyrosyl-[protein] + phosphate. It catalyses the reaction O-phospho-L-seryl-[protein] + H2O = L-seryl-[protein] + phosphate. The catalysed reaction is O-phospho-L-threonyl-[protein] + H2O = L-threonyl-[protein] + phosphate. In terms of biological role, protein phosphatase involved in the inactivation of MAP kinases. Has a specificity for the MAPK11/MAPK12/MAPK13/MAPK14 subfamily. It preferably dephosphorylates p38. The chain is Dual specificity protein phosphatase 10 (DUSP10) from Homo sapiens (Human).